A 447-amino-acid polypeptide reads, in one-letter code: MYQKLLEEYKSKLVTADEAAKQVKSGDWVEYGFGINCARDFDEALAKRKDELEDVKIRCDIGAYQHFTAEVDPDNKHFTWNSWHVAGHDRKFINKNLFYIPMKFHENPMMTRKDCVPTNVAVIQCTAMDKHGYFNFGGSSVNCCAMMETARVTILEVNEKMPRCLGGNQECLHISQVDYIIQSKNEPIATIGSAEPSPVEIAMAQHIIERLYDGNCIQLGIGGTPNAVGSMVAASDLKDLGVHTEMYVDAYLLMAKAGKITGARKSIDKYKQVYSFAMGSQELYDYIDDNPGLASYSVDYTNNPWVVAQIDDFVSINACIEVDLYGQVCAESVGTRHISGTGGQLDFVEGAYKSKNGQSFICLPSTIEIKGEVTSRIKPILTPGAIVTDPRTATHMMVTEFGIATLKGRSTWERAEELIKIAHPDFQDELVKEAQKMNIWRKSNKIG.

A CoA-binding site is contributed by 220 to 224; it reads GIGGT. E245 (5-glutamyl coenzyme A thioester intermediate) is an active-site residue. 2 residues coordinate CoA: I320 and G343.

This sequence belongs to the acetyl-CoA hydrolase/transferase family.

The protein localises to the cytoplasm. The enzyme catalyses butanoate + acetyl-CoA = butanoyl-CoA + acetate. It participates in lipid metabolism; butanoate metabolism. Coenzyme A-transferase that converts butyrate to butyryl-CoA. Involved in the syntrophic growth of S.wolfei on butyrate in cooperation with methanogens or an appropriate hydrogen-scavenging bacterium, as part of the butyrate oxidation pathway. The protein is Probable butyrate:acetyl-CoA coenzyme A-transferase of Syntrophomonas wolfei subsp. wolfei (strain DSM 2245B / Goettingen).